A 78-amino-acid polypeptide reads, in one-letter code: Large ribosomal subunit protein bL28 (78 aa).

The protein belongs to the bacterial ribosomal protein bL28 family.

The polypeptide is Large ribosomal subunit protein bL28 (Corynebacterium aurimucosum (strain ATCC 700975 / DSM 44827 / CIP 107346 / CN-1) (Corynebacterium nigricans)).